Consider the following 617-residue polypeptide: Probable translation initiation factor IF-2 (617 aa).

Positions L14–L231 constitute a tr-type G domain. The tract at residues G23 to T30 is G1. Residue G23 to T30 coordinates GTP. A G2 region spans residues G48–H52. The interval D87–G90 is G3. Residues D87–H91 and N141–D144 each bind GTP. A G4 region spans residues N141 to D144. The G5 stretch occupies residues S209–R211.

The protein belongs to the TRAFAC class translation factor GTPase superfamily. Classic translation factor GTPase family. IF-2 subfamily.

Its function is as follows. Function in general translation initiation by promoting the binding of the formylmethionine-tRNA to ribosomes. Seems to function along with eIF-2. In Aeropyrum pernix (strain ATCC 700893 / DSM 11879 / JCM 9820 / NBRC 100138 / K1), this protein is Probable translation initiation factor IF-2 (infB).